Consider the following 77-residue polypeptide: Acyl carrier protein (77 aa).

One can recognise a Carrier domain in the interval 2–77 (SDIAARVKKI…DATKFISEAQ (76 aa)). Ser-37 carries the post-translational modification O-(pantetheine 4'-phosphoryl)serine.

It belongs to the acyl carrier protein (ACP) family. 4'-phosphopantetheine is transferred from CoA to a specific serine of apo-ACP by AcpS. This modification is essential for activity because fatty acids are bound in thioester linkage to the sulfhydryl of the prosthetic group.

It is found in the cytoplasm. It functions in the pathway lipid metabolism; fatty acid biosynthesis. In terms of biological role, carrier of the growing fatty acid chain in fatty acid biosynthesis. This chain is Acyl carrier protein, found in Jannaschia sp. (strain CCS1).